A 266-amino-acid polypeptide reads, in one-letter code: uncharacterized protein (266 aa).

A signal peptide spans Met-1–Gly-22. Cys-23 carries the N-palmitoyl cysteine lipid modification. Cys-23 carries S-diacylglycerol cysteine lipidation.

The protein belongs to the staphylococcal tandem lipoprotein family.

It localises to the cell membrane. This is an uncharacterized protein from Staphylococcus aureus (strain USA300).